The following is a 98-amino-acid chain: Large ribosomal subunit protein uL23 (98 aa).

The protein belongs to the universal ribosomal protein uL23 family. In terms of assembly, part of the 50S ribosomal subunit. Contacts protein L29, and trigger factor when it is bound to the ribosome.

Its function is as follows. One of the early assembly proteins it binds 23S rRNA. One of the proteins that surrounds the polypeptide exit tunnel on the outside of the ribosome. Forms the main docking site for trigger factor binding to the ribosome. The chain is Large ribosomal subunit protein uL23 from Methylobacterium sp. (strain 4-46).